We begin with the raw amino-acid sequence, 259 residues long: Phosphatidylglycerol--prolipoprotein diacylglyceryl transferase (259 aa).

Helical transmembrane passes span 9-29, 55-75, 92-112, and 117-137; these read IIFSIGPLAVSWYSLSYVVGI, FITYAVIGIIVGGRLGFVLLY, EGGMSFHGGALGVIIAAYLFC, and INFLSLTDIIAPVVPIGLFLG. A 1,2-diacyl-sn-glycero-3-phospho-(1'-sn-glycerol) is bound at residue Arg-138. A run of 3 helical transmembrane segments spans residues 172–192, 201–221, and 228–248; these read QLYEAFFEGLVLFCILAYATF, GLNSGIFLIFYALFRIAIEIF, and IGFILDSLTMGQILSVPMLLL.

The protein belongs to the Lgt family.

The protein localises to the cell inner membrane. It carries out the reaction L-cysteinyl-[prolipoprotein] + a 1,2-diacyl-sn-glycero-3-phospho-(1'-sn-glycerol) = an S-1,2-diacyl-sn-glyceryl-L-cysteinyl-[prolipoprotein] + sn-glycerol 1-phosphate + H(+). Its pathway is protein modification; lipoprotein biosynthesis (diacylglyceryl transfer). Its function is as follows. Catalyzes the transfer of the diacylglyceryl group from phosphatidylglycerol to the sulfhydryl group of the N-terminal cysteine of a prolipoprotein, the first step in the formation of mature lipoproteins. This Rickettsia felis (strain ATCC VR-1525 / URRWXCal2) (Rickettsia azadi) protein is Phosphatidylglycerol--prolipoprotein diacylglyceryl transferase.